The following is a 276-amino-acid chain: Pantothenate synthetase (276 aa).

An ATP-binding site is contributed by 27–34; the sequence is MGALHKGH. Catalysis depends on His-34, which acts as the Proton donor. Gln-58 serves as a coordination point for (R)-pantoate. Residue Gln-58 participates in beta-alanine binding. 147–150 lines the ATP pocket; that stretch reads GKKD. (R)-pantoate is bound at residue Gln-153. Residues Val-176 and 184–187 contribute to the ATP site; that span reads LSSR.

The protein belongs to the pantothenate synthetase family. In terms of assembly, homodimer.

It is found in the cytoplasm. The enzyme catalyses (R)-pantoate + beta-alanine + ATP = (R)-pantothenate + AMP + diphosphate + H(+). Its pathway is cofactor biosynthesis; (R)-pantothenate biosynthesis; (R)-pantothenate from (R)-pantoate and beta-alanine: step 1/1. Its function is as follows. Catalyzes the condensation of pantoate with beta-alanine in an ATP-dependent reaction via a pantoyl-adenylate intermediate. The protein is Pantothenate synthetase of Helicobacter acinonychis (strain Sheeba).